Consider the following 225-residue polypeptide: MTPRLRLQPESVGIGMTSQRVRDRLVERLREAGIQDEATLNAMRTVPRHLFIDEALASRAYEDTALPIGHGQTISQPWVVARMTEAVLQVTPAKVLEVGTGSGYQGAILAALGLEVYTVERIGDLLRQARKRFRHLGMNVRSKHDDGRIGWPEHGPYDAIVVTAAAPALVDALVDQLAVGGRLVAPVGGPSSQSLVQLTRGADGAIEQQVLAPVTFVPLLSGMLD.

Serine 75 is a catalytic residue.

It belongs to the methyltransferase superfamily. L-isoaspartyl/D-aspartyl protein methyltransferase family.

The protein localises to the cytoplasm. The catalysed reaction is [protein]-L-isoaspartate + S-adenosyl-L-methionine = [protein]-L-isoaspartate alpha-methyl ester + S-adenosyl-L-homocysteine. In terms of biological role, catalyzes the methyl esterification of L-isoaspartyl residues in peptides and proteins that result from spontaneous decomposition of normal L-aspartyl and L-asparaginyl residues. It plays a role in the repair and/or degradation of damaged proteins. The chain is Protein-L-isoaspartate O-methyltransferase from Xanthomonas euvesicatoria pv. vesicatoria (strain 85-10) (Xanthomonas campestris pv. vesicatoria).